A 217-amino-acid polypeptide reads, in one-letter code: UPF0111 protein MTH_1689 (217 aa).

The protein belongs to the UPF0111 family.

The sequence is that of UPF0111 protein MTH_1689 from Methanothermobacter thermautotrophicus (strain ATCC 29096 / DSM 1053 / JCM 10044 / NBRC 100330 / Delta H) (Methanobacterium thermoautotrophicum).